The chain runs to 150 residues: Protein Smg homolog (150 aa).

This sequence belongs to the Smg family.

This is Protein Smg homolog from Methylobacillus flagellatus (strain ATCC 51484 / DSM 6875 / VKM B-1610 / KT).